The chain runs to 55 residues: Large ribosomal subunit protein bL32c (55 aa).

A disordered region spans residues 1–24; that stretch reads MAVPKKRTSKSKKNARKANWKRKG.

This sequence belongs to the bacterial ribosomal protein bL32 family.

The protein resides in the plastid. It is found in the chloroplast. This is Large ribosomal subunit protein bL32c from Phaeodactylum tricornutum (strain CCAP 1055/1).